The sequence spans 481 residues: Glutamyl-tRNA(Gln) amidotransferase subunit A (481 aa).

Catalysis depends on charge relay system residues Lys74 and Ser149. The Acyl-ester intermediate role is filled by Ser173.

The protein belongs to the amidase family. GatA subfamily. Heterotrimer of A, B and C subunits.

It catalyses the reaction L-glutamyl-tRNA(Gln) + L-glutamine + ATP + H2O = L-glutaminyl-tRNA(Gln) + L-glutamate + ADP + phosphate + H(+). Allows the formation of correctly charged Gln-tRNA(Gln) through the transamidation of misacylated Glu-tRNA(Gln) in organisms which lack glutaminyl-tRNA synthetase. The reaction takes place in the presence of glutamine and ATP through an activated gamma-phospho-Glu-tRNA(Gln). This Francisella tularensis subsp. tularensis (strain FSC 198) protein is Glutamyl-tRNA(Gln) amidotransferase subunit A.